A 423-amino-acid polypeptide reads, in one-letter code: Transcription factor IIIB 50 kDa subunit (423 aa).

The TFIIB-type zinc-finger motif lies at 1–34; it reads MSKNCPECGSSRVVEDDLYSQKQWVCEDCGSVVS. Residues cysteine 5, cysteine 8, cysteine 26, and cysteine 29 each coordinate Zn(2+). Copy 2 of the repeat occupies 171–245; it reads LESFCYDFKL…LARMKYSLMK (75 aa). Residues 325-340 show a composition bias toward low complexity; the sequence is QTSQYSESELSDSKSS. The segment at 325–358 is disordered; that stretch reads QTSQYSESELSDSKSSVQTQCKSPPDEEDEGCEL. At cysteine 373 the chain carries Cysteine sulfenic acid (-SOH).

This sequence belongs to the TFIIB family. As to quaternary structure, component of TFIIIB complexes. Interacts with TBP and forms a ternary complex with TBp and target DNA sequences. In terms of processing, in response to oxidative stress, a Cys-residue is reversibly oxidized to cysteine sulfenic acid. This impairs formation of a ternary complex with TBP and DNA and down-regulates expression of target genes in response to oxidative stress.

The protein localises to the nucleus. In terms of biological role, general activator of RNA polymerase III transcription. Factor exclusively required for RNA polymerase III transcription of genes with promoter elements upstream of the initiation sites. Contributes to the regulation of gene expression; functions as activator in the absence of oxidative stress. Down-regulates expression of target genes in response to oxidative stress. Overexpression protects cells against apoptosis in response to oxidative stress. The sequence is that of Transcription factor IIIB 50 kDa subunit (brf2) from Danio rerio (Zebrafish).